The primary structure comprises 209 residues: 2-phospho-L-lactate guanylyltransferase (209 aa).

The protein belongs to the CofC family. In terms of assembly, homodimer.

The enzyme catalyses (2S)-2-phospholactate + GTP + H(+) = (2S)-lactyl-2-diphospho-5'-guanosine + diphosphate. It functions in the pathway cofactor biosynthesis; coenzyme F420 biosynthesis. Guanylyltransferase that catalyzes the activation of (2S)-2-phospholactate (2-PL) as (2S)-lactyl-2-diphospho-5'-guanosine, via the condensation of 2-PL with GTP. It is involved in the biosynthesis of coenzyme F420, a hydride carrier cofactor. This chain is 2-phospho-L-lactate guanylyltransferase, found in Methanosphaerula palustris (strain ATCC BAA-1556 / DSM 19958 / E1-9c).